The chain runs to 208 residues: RxLR effector protein Avr1 (208 aa).

Positions 1 to 22 (MGLMHRVLLLATFALLCMHAKA) are cleaved as a signal peptide. A RxLR-dEER motif is present at residues 41 to 54 (RQLRTATMSDDEAR). Positions 70 to 92 (KIESWIQNKVTDDFVLSELKLVR) are W1-motif. Positions 93 to 110 (LPGTSLADDPNFKLFQKF) are linker region ln1. The segment at 111 to 136 (KIGGWLEEKATTTKAWENLGLDSLPF) is W2-motif. Residues 137–157 (DQVSKIDEFKTYTQYVTVLNK) are Y-motif. A linker region ln2 region spans residues 158 to 170 (KASKLDIDQWHGL). The segment at 170–208 (LLSGGSPEELMAKAMILRTLGRDVLERRVMLGGHVVVPF) is T-region.

The protein belongs to the RxLR effector family. Interacts with host exocyst component Sec5.

Its subcellular location is the secreted. It localises to the host cytoplasm. The protein resides in the host nucleus. It is found in the host peroxisome. Secreted effector that acts as an elicitor of hypersensitive response (HR) specifically on plants carrying defense protein R1, through its interaction with this protein. Also acts as a virulence factor that promotes colonization and suppresses cell death induced by CRN2 as well as callose deposition, a hallmark of basal defense. Interacts with host exocyst component Sec5 and thereby disturbs vesicle trafficking, a cellular process that is important for basal defense. By targeting and stabilizing Sec5 in the cytoplasm, the exocyst complex is thus out of balance and not able to mediate the focal secretion of PR-1 and callose. In Phytophthora infestans (strain T30-4) (Potato late blight agent), this protein is RxLR effector protein Avr1.